The following is a 410-amino-acid chain: Putative odorant receptor 65c (410 aa).

Residues 1–59 lie on the Cytoplasmic side of the membrane; the sequence is MDIRGNVHRFVKFYIDGWKHFRDPTMESSYSAVYYWREQMKAMFLYTTSKERQMPYRSS. Residues 60 to 80 form a helical membrane-spanning segment; the sequence is WHTLVIIQATVCFLTMCYGVT. Residues 81–92 are Extracellular-facing; that stretch reads ESLGDKVQMGRD. Residues 93-113 traverse the membrane as a helical segment; the sequence is IAFIIGFFYIAFKIYYFQWYG. Residues 114–148 are Cytoplasmic-facing; sequence DELDEVVEALETFHPWAQKGPGAVDYRTAKRWYFT. The helical transmembrane segment at 149-169 threads the bilayer; it reads LAFFLASSWLVFLCIFILLLI. Residues 170–222 are Extracellular-facing; the sequence is TSPLWVHQQILPLHAAFPFQWHEKSIHPISHAFIYLFQTWNVMYFLTWLVCIE. The chain crosses the membrane as a helical span at residues 223–243; sequence GLSVSIYVEITFAIEVLCLEL. Over 244-279 the chain is Cytoplasmic; the sequence is RHLHQRCHGYEQLRLETNRLVQFHQKIVHILDHTNK. The chain crosses the membrane as a helical span at residues 280-300; it reads VFHGTLIMQMGVNFFLVSLSV. Over 301-312 the chain is Extracellular; that stretch reads LEAMEARKDPKV. A helical transmembrane segment spans residues 313 to 333; it reads VAQFAVLMLLALGHLSMWSYF. Topologically, residues 334–385 are cytoplasmic; it reads GDLLSQKSLTISEAAYEAYDPIKGSKDVYRDLCLIIRRGQEPLIMRASPFPS. The helical transmembrane segment at 386–406 threads the bilayer; that stretch reads FNFINYSAILNQCYGILTFLL. Residues 407-410 are Extracellular-facing; the sequence is KTLD.

It belongs to the insect chemoreceptor superfamily. Heteromeric odorant receptor channel (TC 1.A.69) family. Or49a subfamily. As to quaternary structure, interacts with Orco. Complexes exist early in the endomembrane system in olfactory sensory neurons (OSNs), coupling these complexes to the conserved ciliary trafficking pathway.

The protein localises to the cell membrane. In terms of biological role, odorant receptor which mediates acceptance or avoidance behavior, depending on its substrates. The odorant receptor repertoire encodes a large collection of odor stimuli that vary widely in identity, intensity, and duration. May form a complex with Orco to form odorant-sensing units, providing sensitive and prolonged odorant signaling and calcium permeability. The chain is Putative odorant receptor 65c (Or65c) from Drosophila melanogaster (Fruit fly).